Here is a 108-residue protein sequence, read N- to C-terminus: CRISPR-associated endoribonuclease Cas2 (108 aa).

Asp15 contributes to the Mg(2+) binding site.

It belongs to the CRISPR-associated endoribonuclease Cas2 protein family. As to quaternary structure, homodimer, forms a heterotetramer with a Cas1 homodimer. Requires Mg(2+) as cofactor.

CRISPR (clustered regularly interspaced short palindromic repeat), is an adaptive immune system that provides protection against mobile genetic elements (viruses, transposable elements and conjugative plasmids). CRISPR clusters contain sequences complementary to antecedent mobile elements and target invading nucleic acids. CRISPR clusters are transcribed and processed into CRISPR RNA (crRNA). Functions as a ssRNA-specific endoribonuclease. Involved in the integration of spacer DNA into the CRISPR cassette. In Paracidovorax avenae (strain ATCC 19860 / DSM 7227 / CCUG 15838 / JCM 20985 / LMG 2117 / NCPPB 1011) (Acidovorax avenae), this protein is CRISPR-associated endoribonuclease Cas2.